Reading from the N-terminus, the 1381-residue chain is DNA-directed RNA polymerase subunit beta'' (1381 aa).

Zn(2+) contacts are provided by Cys-224, Cys-296, Cys-303, and Cys-306.

The protein belongs to the RNA polymerase beta' chain family. RpoC2 subfamily. As to quaternary structure, in plastids the minimal PEP RNA polymerase catalytic core is composed of four subunits: alpha, beta, beta', and beta''. When a (nuclear-encoded) sigma factor is associated with the core the holoenzyme is formed, which can initiate transcription. It depends on Zn(2+) as a cofactor.

It localises to the plastid. It is found in the chloroplast. It carries out the reaction RNA(n) + a ribonucleoside 5'-triphosphate = RNA(n+1) + diphosphate. Its function is as follows. DNA-dependent RNA polymerase catalyzes the transcription of DNA into RNA using the four ribonucleoside triphosphates as substrates. The sequence is that of DNA-directed RNA polymerase subunit beta'' from Drimys granadensis.